A 168-amino-acid chain; its full sequence is Large ribosomal subunit protein uL11 (168 aa).

Belongs to the universal ribosomal protein uL11 family. In terms of assembly, part of the ribosomal stalk of the 50S ribosomal subunit. Interacts with L10 and the large rRNA to form the base of the stalk. L10 forms an elongated spine to which L12 dimers bind in a sequential fashion forming a multimeric L10(L12)X complex.

Functionally, forms part of the ribosomal stalk which helps the ribosome interact with GTP-bound translation factors. The sequence is that of Large ribosomal subunit protein uL11 from Metallosphaera sedula (strain ATCC 51363 / DSM 5348 / JCM 9185 / NBRC 15509 / TH2).